The following is a 153-amino-acid chain: Small ribosomal subunit protein uS13 (153 aa).

A disordered region spans residues 132–153 (VRGQRTRSHHRKGRTVGVIKKK). Basic residues predominate over residues 135-153 (QRTRSHHRKGRTVGVIKKK).

Belongs to the universal ribosomal protein uS13 family. As to quaternary structure, part of the 30S ribosomal subunit. Forms a loose heterodimer with protein S19. Forms two bridges to the 50S subunit in the 70S ribosome.

Functionally, located at the top of the head of the 30S subunit, it contacts several helices of the 16S rRNA. In the 70S ribosome it contacts the 23S rRNA (bridge B1a) and protein L5 of the 50S subunit (bridge B1b), connecting the 2 subunits; these bridges are implicated in subunit movement. The polypeptide is Small ribosomal subunit protein uS13 (Nanoarchaeum equitans (strain Kin4-M)).